The following is an 869-amino-acid chain: Phosphatidylethanolamine N-methyltransferase (869 aa).

Ser2 carries the N-acetylserine modification. Residues 2-55 (SSCKTTLSEMVGSVTKDRGTINVEARTRSSNVTFKPPVTHDMVRSLFDPTLKKS) lie on the Lumenal side of the membrane. Residues 56–76 (LLEKCIALAIISNFFICYWVF) form a helical membrane-spanning segment. The Cytoplasmic portion of the chain corresponds to 77 to 86 (QRFGLQFTKY). The helical transmembrane segment at 87-107 (FFLVQYLFWRIAYNLGIGLVL) threads the bilayer. Residues 108-187 (HYQSHYETLT…EINVWLIFRQ (80 aa)) lie on the Lumenal side of the membrane. The chain crosses the membrane as a helical span at residues 188 to 208 (FVDLILMQDFVTYIIYVYLSI). The Cytoplasmic segment spans residues 209 to 212 (PYSW). Residues 213–233 (VQIFNWRSLLGVILILFNIWV) form a helical membrane-spanning segment. Topologically, residues 234–258 (KLDAHRVVKDYAWYWGDFFFLEESE) are lumenal. A helical membrane pass occupies residues 259 to 279 (LIFDGVFNISPHPMYSIGYLG). At 280–291 (YYGLSLICNDYK) the chain is on the cytoplasmic side. Residues 292-310 (VLLVSVFGHYSQFLFLKYV) form a helical membrane-spanning segment. The Lumenal segment spans residues 311 to 362 (ENPHIERTYGDGTDSDSQMNSRIDDLISKENYDYSRPLINMGLSFNNFNKLR). Residues 363 to 383 (FTDYFTIGTVAALMLGTIMNA) traverse the membrane as a helical segment. The Cytoplasmic portion of the chain corresponds to 384-389 (RFINLN). The chain crosses the membrane as a helical span at residues 390-410 (YLFITVFVTKLVSWLFISTIL). At 411–439 (YKQSQSKWFTRLFLENGYTQVYSYEQWQF) the chain is on the lumenal side. A helical membrane pass occupies residues 440–460 (IYNYYLVLTYTLMIIHTGLQI). The Cytoplasmic segment spans residues 461–463 (WSN). The chain crosses the membrane as a helical span at residues 464–484 (FSNINNSQLIFGLILVALQTW). The Lumenal segment spans residues 485–534 (CDKETRLAISDFGWFYGDFFLSNYISTRKLTSQGIYRYLNHPEAVLGVVG). The chain crosses the membrane as a helical span at residues 535–555 (VWGTVLMTNFAVTNIILAVLW). Residues 556 to 869 (TLTNFILVKF…DIKQTLDSLA (314 aa)) are Cytoplasmic-facing.

This sequence belongs to the class VI-like SAM-binding methyltransferase superfamily. CHO2 family.

The protein localises to the endoplasmic reticulum membrane. The enzyme catalyses a 1,2-diacyl-sn-glycero-3-phosphoethanolamine + S-adenosyl-L-methionine = a 1,2-diacyl-sn-glycero-3-phospho-N-methylethanolamine + S-adenosyl-L-homocysteine + H(+). Its pathway is phospholipid metabolism; phosphatidylcholine biosynthesis. Catalyzes the first step of the methylation pathway of phosphatidylcholine biosynthesis, the SAM-dependent methylation of phosphatidylethanolamine (PE) to phosphatidylmonomethylethanolamine (PMME). Preferentially converts di-C16:1 substrates. This is Phosphatidylethanolamine N-methyltransferase from Saccharomyces cerevisiae (strain ATCC 204508 / S288c) (Baker's yeast).